We begin with the raw amino-acid sequence, 119 residues long: uncharacterized protein (119 aa).

Transmembrane regions (helical) follow at residues 52 to 72 (IVLF…VINI) and 88 to 108 (VLFS…IFLI).

It localises to the membrane. This is an uncharacterized protein from Dictyostelium discoideum (Social amoeba).